Here is an 886-residue protein sequence, read N- to C-terminus: Kinesin-like protein KIF18A (886 aa).

A Kinesin motor domain is found at 11–355; it reads RMKVVVRVRP…LKYANRAKEI (345 aa). Residue Lys24 forms a Glycyl lysine isopeptide (Lys-Gly) (interchain with G-Cter in SUMO2) linkage. 113–120 is a binding site for ATP; the sequence is GATGSGKT. Residues 370-404 are a coiled coil; it reads ISQYVKICNMQKAEILMLKEKLKAYEEQKALSDRN. Phosphoserine is present on Ser674. Residue Lys683 forms a Glycyl lysine isopeptide (Lys-Gly) (interchain with G-Cter in SUMO2) linkage. Ser695 bears the Phosphoserine mark. The tract at residues 774 to 804 is disordered; it reads EQEPLASSKSSVHRIESSSFSTKDSMPESAG. Residue Lys782 forms a Glycyl lysine isopeptide (Lys-Gly) (interchain with G-Cter in SUMO2) linkage. At Ser826 the chain carries Phosphoserine. Lys862 is covalently cross-linked (Glycyl lysine isopeptide (Lys-Gly) (interchain with G-Cter in SUMO2)). Positions 862–886 are disordered; sequence KRNTNKTNSNMLRKFRRNTSKENVQ.

The protein belongs to the TRAFAC class myosin-kinesin ATPase superfamily. Kinesin family. Interacts with CENPE and ESR1. Glycosylated. In terms of processing, ubiquitinated.

Its subcellular location is the cell projection. It localises to the ruffle. The protein resides in the cytoplasm. The protein localises to the nucleus. It is found in the cytoskeleton. Its subcellular location is the microtubule organizing center. It localises to the centrosome. Microtubule-depolymerizing kinesin which plays a role in chromosome congression by reducing the amplitude of preanaphase oscillations and slowing poleward movement during anaphase, thus suppressing chromosome movements. May stabilize the CENPE-BUB1B complex at the kinetochores during early mitosis and maintains CENPE levels at kinetochores during chromosome congression. In Mus musculus (Mouse), this protein is Kinesin-like protein KIF18A (Kif18a).